The sequence spans 883 residues: Aldehyde-alcohol dehydrogenase (883 aa).

The segment at 13–456 (KLVAEKHVDE…DNVSAINLLN (444 aa)) is aldehyde dehydrogenase. NAD(+) contacts are provided by residues 121–126 (ITPTTN), Gly206, and Gly224. Cys257 serves as the catalytic Nucleophile. Residues Glu355, Leu435, and 438-443 (GSYGRN) each bind NAD(+). Residues 457–464 (IKKVGRRR) form a linker region. Residues Asp500, Asp534, 561 to 565 (GSPMD), 612 to 613 (TT), Val625, Lys634, and Leu653 each bind NAD(+). Fe cation-binding residues include Asp668, His672, His736, and His750.

The protein in the N-terminal section; belongs to the aldehyde dehydrogenase family. It in the C-terminal section; belongs to the iron-containing alcohol dehydrogenase family. The cofactor is Fe(2+).

It carries out the reaction ethanol + NAD(+) = acetaldehyde + NADH + H(+). The enzyme catalyses an aldehyde + NAD(+) + H2O = a carboxylate + NADH + 2 H(+). Has alcohol dehydrogenase activity. Has aldehyde dehydrogenase activity. May play a role in enhancing virulence in mice. May be considered a potential virulence factor. The sequence is that of Aldehyde-alcohol dehydrogenase from Streptococcus pneumoniae serotype 4 (strain ATCC BAA-334 / TIGR4).